Consider the following 260-residue polypeptide: Small ribosomal subunit protein eS4 (260 aa).

One can recognise an S4 RNA-binding domain in the interval 46–111; sequence VPLLILVRDM…RYRVVMNEHH (66 aa).

The protein belongs to the eukaryotic ribosomal protein eS4 family.

The sequence is that of Small ribosomal subunit protein eS4 from Methanopyrus kandleri (strain AV19 / DSM 6324 / JCM 9639 / NBRC 100938).